Consider the following 229-residue polypeptide: Ras-related protein rab-39 (229 aa).

A GTP-binding site is contributed by 73 to 77; the sequence is DTAGQ. 2 S-geranylgeranyl cysteine lipidation sites follow: C227 and C229. Residue C229 is modified to Cysteine methyl ester.

It belongs to the small GTPase superfamily. Rab family. As to quaternary structure, interacts (in GTP-bound form) with Ras association domain-containing protein rsf-1.

Its subcellular location is the cell membrane. It localises to the cytoplasmic vesicle membrane. It is found in the golgi apparatus. Functionally, small GTPases Rab involved in autophagy. The small GTPases Rab are key regulators of intracellular membrane trafficking, from the formation of transport vesicles to their fusion with membranes. Rabs cycle between an inactive GDP-bound form and an active GTP-bound form that is able to recruit to membranes different sets of downstream effectors directly responsible for vesicle formation, movement, tethering and fusion. Involved in positively regulating the oxidative stress response, perhaps in concert with the Ras association domain-containing protein rsf-1. The protein is Ras-related protein rab-39 of Caenorhabditis elegans.